A 277-amino-acid polypeptide reads, in one-letter code: Photosystem I assembly factor PSA3, chloroplastic (277 aa).

The N-terminal 45 residues, Met1–Arg45, are a transit peptide targeting the chloroplast.

In terms of assembly, interacts with PYG7.

Its subcellular location is the plastid. It localises to the chloroplast. The protein localises to the chloroplast thylakoid membrane. In terms of biological role, nuclear genome-encoded factor required for the accumulation of photosystem I (PSI). Functions as a PSI biogenesis factor. Cooperates with PYG7 to promote the stable assembly of PSI in the thylakoid membrane. May target primarily the PsaC subunit. Does not seem to be required for the expression of chloroplast genes encoding PSI subunits. The protein is Photosystem I assembly factor PSA3, chloroplastic of Arabidopsis thaliana (Mouse-ear cress).